Reading from the N-terminus, the 541-residue chain is uncharacterized protein (541 aa).

Helical transmembrane passes span 4–23 (FVANPLLALFVIMAVGLAIG), 30–47 (FSLGVAAVLFAGVGFAAV), 57–79 (VYILGLSIFVYSIGLESGHAFFA), 91–113 (LAITALALITGISIALFSLIHLN), and 156–178 (LVAYSLAYPIGVLGVIAAIGLCA). 2 RCK C-terminal domains span residues 187–271 (QEAH…VLGD) and 273–354 (LPGD…LFGD). The next 5 helical transmembrane spans lie at 362–384 (FNLFPLVAGLALGLLVGMIEVPL), 389–411 (ALSLGSAGGPLVVALVLGAVGRS), 424–446 (LALRQLGITLFLAAIGTTAGASF), 456–478 (LTIIAVGAIITLTLAIFVLVVGY), and 516–538 (LGYTSVYPLAMIAKIIAAQVVLF).

The protein belongs to the AAE transporter (TC 2.A.81) family.

Its subcellular location is the cell membrane. This is an uncharacterized protein from Corynebacterium diphtheriae (strain ATCC 700971 / NCTC 13129 / Biotype gravis).